Here is a 361-residue protein sequence, read N- to C-terminus: MRKFTILLMLLLASSAQAARIKDVAQVAGVRNNQLVGYGLVTGLPGTGESTPFTDQSFNAMLQSFGIQLPPGTKPKTKNVAAVIVTADLPAFSKQGQTIDITVSSIGSAKSLRGGTLMQTFLKGLDGQVYAVAQGNLVVSGFSATGADGSKIVGNNPTVGMISSGAIVEREVPNPFGRGDYITFNLFESDFTTAQRLADAVNQFLGPQMASAVDAASIKVRAPRDLSQRVAFLSAIENLEFNPADSAAKIIVNSRTGTIVVGQNVRLKPAAVTHGGMTVAIKENLNVSQPNALGGGQTVVVPNTEIEVTEKQGKMFKLEPGVTLDDLVRAVNEVGAAPSDLMAILQALKQAGAIEGQLIII.

The first 18 residues, 1–18, serve as a signal peptide directing secretion; it reads MRKFTILLMLLLASSAQA.

This sequence belongs to the FlgI family. As to quaternary structure, the basal body constitutes a major portion of the flagellar organelle and consists of four rings (L,P,S, and M) mounted on a central rod.

The protein localises to the periplasm. Its subcellular location is the bacterial flagellum basal body. Its function is as follows. Assembles around the rod to form the L-ring and probably protects the motor/basal body from shearing forces during rotation. This is Flagellar P-ring protein from Vibrio cholerae serotype O1 (strain ATCC 39541 / Classical Ogawa 395 / O395).